The following is a 133-amino-acid chain: Nickel-responsive regulator (133 aa).

Ni(2+)-binding residues include histidine 76, histidine 87, histidine 89, and cysteine 95.

This sequence belongs to the transcriptional regulatory CopG/NikR family. In terms of assembly, homotetramer. It depends on Ni(2+) as a cofactor.

Its function is as follows. Transcriptional repressor of the nikABCDE operon. Is active in the presence of excessive concentrations of intracellular nickel. The polypeptide is Nickel-responsive regulator (Escherichia fergusonii (strain ATCC 35469 / DSM 13698 / CCUG 18766 / IAM 14443 / JCM 21226 / LMG 7866 / NBRC 102419 / NCTC 12128 / CDC 0568-73)).